A 148-amino-acid polypeptide reads, in one-letter code: Putative ankyrin repeat protein RF_1158 (148 aa).

One copy of the ANK repeat lies at arginine 82–aspartate 115.

The chain is Putative ankyrin repeat protein RF_1158 from Rickettsia felis (strain ATCC VR-1525 / URRWXCal2) (Rickettsia azadi).